The sequence spans 467 residues: 3-isopropylmalate dehydratase large subunit (467 aa).

Cysteine 349, cysteine 409, and cysteine 412 together coordinate [4Fe-4S] cluster. The segment at 422–443 (PGQRSASTSNRNFEGRQGRGGR) is disordered.

This sequence belongs to the aconitase/IPM isomerase family. LeuC type 1 subfamily. Heterodimer of LeuC and LeuD. [4Fe-4S] cluster is required as a cofactor.

It catalyses the reaction (2R,3S)-3-isopropylmalate = (2S)-2-isopropylmalate. It functions in the pathway amino-acid biosynthesis; L-leucine biosynthesis; L-leucine from 3-methyl-2-oxobutanoate: step 2/4. Functionally, catalyzes the isomerization between 2-isopropylmalate and 3-isopropylmalate, via the formation of 2-isopropylmaleate. In Paramagnetospirillum magneticum (strain ATCC 700264 / AMB-1) (Magnetospirillum magneticum), this protein is 3-isopropylmalate dehydratase large subunit.